A 578-amino-acid chain; its full sequence is Asparagine synthetase [glutamine-hydrolyzing] 3 (578 aa).

Residue Cys-2 is the For GATase activity of the active site. In terms of domain architecture, Glutamine amidotransferase type-2 spans 2 to 185 (CGILAVLGCV…PGHIYSSKQG (184 aa)). L-glutamine contacts are provided by residues 50–54 (RLAIV), 75–77 (NGE), and Asp-98. The Asparagine synthetase domain occupies 210-450 (VRNTFEKAVI…LPKHILYRQK (241 aa)). ATP is bound by residues Leu-231, Ile-267, and 341–342 (SG). Residues 555–572 (GEDKTEDSRPEKLQKLAE) show a composition bias toward basic and acidic residues. Residues 555–578 (GEDKTEDSRPEKLQKLAEKTPAIV) form a disordered region.

The enzyme catalyses L-aspartate + L-glutamine + ATP + H2O = L-asparagine + L-glutamate + AMP + diphosphate + H(+). The protein operates within amino-acid biosynthesis; L-asparagine biosynthesis. Essential for nitrogen assimilation, distribution and remobilization within the plant via the phloem. This chain is Asparagine synthetase [glutamine-hydrolyzing] 3 (ASN3), found in Arabidopsis thaliana (Mouse-ear cress).